The chain runs to 147 residues: Large ribosomal subunit protein uL13 (147 aa).

Belongs to the universal ribosomal protein uL13 family. In terms of assembly, part of the 50S ribosomal subunit.

This protein is one of the early assembly proteins of the 50S ribosomal subunit, although it is not seen to bind rRNA by itself. It is important during the early stages of 50S assembly. This is Large ribosomal subunit protein uL13 from Polaromonas naphthalenivorans (strain CJ2).